Consider the following 186-residue polypeptide: uncharacterized protein (186 aa).

The next 3 membrane-spanning stretches (helical) occupy residues 43–63, 69–89, and 143–163; these read GAWV…HAIP, LAWT…FHWV, and WMFL…LPAV.

The protein resides in the endoplasmic reticulum membrane. This is an uncharacterized protein from Schizosaccharomyces pombe (strain 972 / ATCC 24843) (Fission yeast).